The chain runs to 495 residues: Glycerol kinase (495 aa).

T11 is an ADP binding site. T11, T12, and S13 together coordinate ATP. T11 lines the sn-glycerol 3-phosphate pocket. Position 15 (R15) interacts with ADP. 4 residues coordinate sn-glycerol 3-phosphate: R81, E82, Y133, and D242. The glycerol site is built by R81, E82, Y133, D242, and Q243. Residues T264 and G307 each contribute to the ADP site. ATP is bound by residues T264, G307, Q311, and G408. ADP contacts are provided by G408 and N412.

The protein belongs to the FGGY kinase family.

The catalysed reaction is glycerol + ATP = sn-glycerol 3-phosphate + ADP + H(+). Its pathway is polyol metabolism; glycerol degradation via glycerol kinase pathway; sn-glycerol 3-phosphate from glycerol: step 1/1. With respect to regulation, inhibited by fructose 1,6-bisphosphate (FBP). In terms of biological role, key enzyme in the regulation of glycerol uptake and metabolism. Catalyzes the phosphorylation of glycerol to yield sn-glycerol 3-phosphate. The sequence is that of Glycerol kinase from Acinetobacter baylyi (strain ATCC 33305 / BD413 / ADP1).